A 346-amino-acid polypeptide reads, in one-letter code: Probable electron transfer flavoprotein subunit alpha, mitochondrial (346 aa).

FAD is bound at residue 285–313 (LYVAVGISGAIQHLAGMKESKMIVAINKD).

Belongs to the ETF alpha-subunit/FixB family. In terms of assembly, heterodimer of an alpha and a beta subunit. FAD is required as a cofactor.

It localises to the mitochondrion matrix. Functionally, the electron transfer flavoprotein serves as a specific electron acceptor for several dehydrogenases, including five acyl-CoA dehydrogenases, glutaryl-CoA and sarcosine dehydrogenase. It transfers the electrons to the main mitochondrial respiratory chain via ETF-ubiquinone oxidoreductase (ETF dehydrogenase). In Cryptococcus neoformans var. grubii (Filobasidiella neoformans var. grubii), this protein is Probable electron transfer flavoprotein subunit alpha, mitochondrial (ETF1).